Consider the following 407-residue polypeptide: MRLLSVLVFLISVISIAKADYQYAFCKFNELSIGGVEGIAHLLSTDGTTLNITFDFTTSYAQNTQFAAQILTYGYNPSSMTNLGSVFDPTNVKTAGCPSGTPRAGDIGNIQANGGNVEAQTISLNIPNIKDDANSIIGRSIAIYGGSYDCSDPSKSVIGDMISFCTIGVGNIDYSSFDKSKLTGVNTASSYSNLENAIGLAVVYNTTITKGDYIEGRVLFKALNSSFIQVSAKVSGLSYQAHGFHVHQFGDVSSDNGTSIGGHFLKTGQEHSLPPSGTRHYGDFGNFCAFSQDMMDTGYYYYETDHVTAALVIGRGMAVHNFTDKGNSDVGGSRCGQGVIALIQDADYSLNLPMDWKWDVICANGSYYGDMSTSMNSESYNDNEPGSSSTVIPFFALIIFSIIFALL.

Residues 1-19 (MRLLSVLVFLISVISIAKA) form the signal peptide. At 20 to 386 (DYQYAFCKFN…SESYNDNEPG (367 aa)) the chain is on the extracellular side. 3 N-linked (GlcNAc...) asparagine glycosylation sites follow: N51, N205, and N224. Cu cation-binding residues include H245 and H247. Residue N256 is glycosylated (N-linked (GlcNAc...) asparagine). Residue H263 coordinates Cu cation. Zn(2+)-binding residues include H263, H271, H280, and D283. Position 320 (H320) interacts with Cu cation. 2 N-linked (GlcNAc...) asparagine glycosylation sites follow: N321 and N364. Residues 387–406 (SSSTVIPFFALIIFSIIFAL) form a helical membrane-spanning segment. Residue L407 is a topological domain, cytoplasmic.

The protein belongs to the Cu-Zn superoxide dismutase family. Cu cation serves as cofactor. Requires Zn(2+) as cofactor.

Its subcellular location is the cell membrane. It carries out the reaction 2 superoxide + 2 H(+) = H2O2 + O2. Functionally, protect the extracellular space from toxic effect of reactive oxygen intermediates by converting superoxyde radicals into hydrogen peroxyde and oxygen. In Dictyostelium discoideum (Social amoeba), this protein is Extracellular superoxide dismutase [Cu-Zn] 3 (sodC).